A 234-amino-acid chain; its full sequence is Synaptogyrin-1 (234 aa).

An N-acetylmethionine modification is found at Met1. Topologically, residues 1–23 (MEGGAYGAGKAGGAFDPYTLVRQ) are cytoplasmic. The region spanning 20–173 (LVRQPHTILR…QAVLAFQRYQ (154 aa)) is the MARVEL domain. The chain crosses the membrane as a helical span at residues 24-44 (PHTILRVVSWVFSIVVFGSIV). The Lumenal segment spans residues 45–71 (NEGYLNNPEEEEEFCIYNRNPNACSYG). The helical transmembrane segment at 72-92 (VTVGVLAFLTCLLYLALDVYF) threads the bilayer. The Cytoplasmic segment spans residues 93–103 (PQISSVKDRKK). The chain crosses the membrane as a helical span at residues 104–124 (AVLSDIGVSAFWAFFWFVGFC). The Lumenal segment spans residues 125-148 (FLANQWQVSKPKDNPLNEGTDAAR). The chain crosses the membrane as a helical span at residues 149-169 (AAIAFSFFSIFTWAGQAVLAF). Topologically, residues 170–234 (QRYQIGADSA…EPQGYQSQGY (65 aa)) are cytoplasmic. A disordered region spans residues 201-234 (EPSAGSDPAGMGGTYQHPANAFDAEPQGYQSQGY).

Belongs to the synaptogyrin family.

It localises to the cytoplasmic vesicle. The protein localises to the secretory vesicle. It is found in the synaptic vesicle membrane. Its subcellular location is the melanosome. In terms of biological role, may play a role in regulated exocytosis. Modulates the localization of synaptophysin/SYP into synaptic-like microvesicles and may therefore play a role in synaptic-like microvesicle formation and/or maturation. Involved in the regulation of short-term and long-term synaptic plasticity. In Mus musculus (Mouse), this protein is Synaptogyrin-1.